A 410-amino-acid polypeptide reads, in one-letter code: Single Ig IL-1-related receptor (410 aa).

Over 1-118 (MPGVCDRAPD…TLQRAGPTSH (118 aa)) the chain is Extracellular. The 101-residue stretch at 9-109 (PDFLSPSEDQ…IQNISFSSFT (101 aa)) folds into the Ig-like C2-type domain. Asn31, Asn73, Asn86, and Asn102 each carry an N-linked (GlcNAc...) asparagine glycan. A disulfide bridge links Cys32 with Cys98. Residues 119 to 139 (VAAVLASLLVLLALLLAALLY) traverse the membrane as a helical; Signal-anchor for type III membrane protein segment. Over 140–410 (VKCRLNVLLW…FYCLVSKDDM (271 aa)) the chain is Cytoplasmic. The 145-residue stretch at 163–307 (KLYDAYVSYS…DFWKEVQLAL (145 aa)) folds into the TIR domain. The disordered stretch occupies residues 340–390 (EGRALDSEVDPDPEGDLGVRGPVFGEPSAPPHTSGVSLGESRSSEVDVSDL). A Phosphoserine modification is found at Ser383.

This sequence belongs to the interleukin-1 receptor family. As to quaternary structure, interacts with IL1R1, IRAK1, TLR4, TLR5, TLR9 and TRAF6. Upon IL-1 stimulation found in a complex at least composed of IL1R1, SIGIRR, MYD88, IRAK1 and TRAF6. Upon stimulation with LPC found in a complex at least composed of TLR4, SIG1IR, MYD88, IRAK1 and TRAF6. Interacts with PALM3. As to expression, mainly expressed in epithelial tissues such as kidney, lung and gut.

The protein resides in the membrane. Its function is as follows. Acts as a negative regulator of the Toll-like and IL-1R receptor signaling pathways. Attenuates the recruitment of receptor-proximal signaling components to the TLR4 receptor, probably through an TIR-TIR domain interaction with TLR4. Through its extracellular domain interferes with the heterodimerization of Il1R1 and IL1RAP. In Homo sapiens (Human), this protein is Single Ig IL-1-related receptor (SIGIRR).